The following is a 112-amino-acid chain: Putative transposase YkgN (112 aa).

The protein belongs to the transposase 8 family.

In Escherichia coli (strain K12), this protein is Putative transposase YkgN (ykgN).